Consider the following 131-residue polypeptide: D-ribose pyranase (131 aa).

The active-site Proton donor is the His20. Substrate-binding positions include Asp28, His98, and 120–122 (FSN).

This sequence belongs to the RbsD / FucU family. RbsD subfamily. As to quaternary structure, homodecamer.

It is found in the cytoplasm. It catalyses the reaction beta-D-ribopyranose = beta-D-ribofuranose. The protein operates within carbohydrate metabolism; D-ribose degradation; D-ribose 5-phosphate from beta-D-ribopyranose: step 1/2. Catalyzes the interconversion of beta-pyran and beta-furan forms of D-ribose. This is D-ribose pyranase from Levilactobacillus brevis (strain ATCC 367 / BCRC 12310 / CIP 105137 / JCM 1170 / LMG 11437 / NCIMB 947 / NCTC 947) (Lactobacillus brevis).